Consider the following 509-residue polypeptide: Fumarate hydratase, mitochondrial (509 aa).

Residues methionine 1–methionine 43 constitute a mitochondrion transit peptide. Substrate contacts are provided by residues serine 144 to threonine 146, histidine 175 to aspartate 178, serine 185 to asparagine 187, and threonine 233. The active-site Proton donor/acceptor is histidine 234. The active site involves serine 364. Substrate-binding positions include serine 365 and lysine 370–asparagine 372.

This sequence belongs to the class-II fumarase/aspartase family. Fumarase subfamily. Homotetramer.

It localises to the mitochondrion. The protein resides in the cytoplasm. It is found in the cytosol. Its subcellular location is the nucleus. The protein localises to the chromosome. The enzyme catalyses (S)-malate = fumarate + H2O. It participates in carbohydrate metabolism; tricarboxylic acid cycle; (S)-malate from fumarate: step 1/1. Its function is as follows. Catalyzes the reversible stereospecific interconversion of fumarate to L-malate. Experiments in other species have demonstrated that specific isoforms of this protein act in defined pathways and favor one direction over the other. Catalyzes the hydration of fumarate to L-malate in the tricarboxylic acid (TCA) cycle to facilitate a transition step in the production of energy in the form of NADH. In terms of biological role, catalyzes the dehydration of L-malate to fumarate. Fumarate metabolism in the cytosol plays a role during urea cycle and arginine metabolism; fumarate being a by-product of the urea cycle and amino-acid catabolism. Also plays a role in DNA repair by promoting non-homologous end-joining (NHEJ). In response to DNA damage translocates to the nucleus and accumulates at DNA double-strand breaks (DSBs): acts by catalyzing formation of fumarate. The sequence is that of Fumarate hydratase, mitochondrial from Danio rerio (Zebrafish).